The primary structure comprises 464 residues: MEPSPLELPVDAVRRIAAELNCDPTDERVALRLDEEDKLSHFRNCFYIPKMRDLPSIDLSLVSEDDDAIYFLGNSLGLQPKMVRTYLEEELDKWAKMGAYGHDVGKRPWIVGDESIVSLMKDIVGAHEKEIALMNALTINLHLLLLSFFKPTPKRHKILLEAKAFPSDHYAIESQIQLHGLDVEKSMRMVKPREGEETLRMEDILEVIEEEGDSIAVILFSGLHFYTGQLFNIPAITKAGHAKGCFVGFDLAHAVGNVELRLHDWGVDFACWCSYKYLNSGAGGLAGAFVHEKHAHTVKPALVGWFGHDLSTRFNMDNKLQLIPGANGFRISNPPILLVCSLHASLEVFQQATMTALRRKSILLTGYLEYMLKHYHSKDNTENKGPIVNIITPSRAEERGCQLTLTFSIPKKSVFKELEKRGVVCDKREPDGIRVAPVPLYNSFHDVYKFIRLLTSILDSSERS.

At methionine 1 the chain carries N-acetylmethionine. Pyridoxal 5'-phosphate is bound by residues leucine 137, threonine 138, 165–168 (FPSD), serine 221, aspartate 250, histidine 253, and tyrosine 275. Position 276 is an N6-(pyridoxal phosphate)lysine (lysine 276). Pyridoxal 5'-phosphate is bound by residues tryptophan 305 and asparagine 333.

It belongs to the kynureninase family. In terms of assembly, homodimer. The cofactor is pyridoxal 5'-phosphate.

Its subcellular location is the cytoplasm. The protein resides in the cytosol. The catalysed reaction is L-kynurenine + H2O = anthranilate + L-alanine + H(+). It carries out the reaction 3-hydroxy-L-kynurenine + H2O = 3-hydroxyanthranilate + L-alanine + H(+). It functions in the pathway amino-acid degradation; L-kynurenine degradation; L-alanine and anthranilate from L-kynurenine: step 1/1. It participates in cofactor biosynthesis; NAD(+) biosynthesis; quinolinate from L-kynurenine: step 2/3. Catalyzes the cleavage of L-kynurenine (L-Kyn) and L-3-hydroxykynurenine (L-3OHKyn) into anthranilic acid (AA) and 3-hydroxyanthranilic acid (3-OHAA), respectively. Has a preference for the L-3-hydroxy form. Also has cysteine-conjugate-beta-lyase activity. The chain is Kynureninase (Kynu) from Mus musculus (Mouse).